A 325-amino-acid chain; its full sequence is Serine/threonine-protein phosphatase 2A activator 1 (325 aa).

The protein belongs to the PTPA-type PPIase family.

The protein localises to the cytoplasm. It is found in the nucleus. It carries out the reaction [protein]-peptidylproline (omega=180) = [protein]-peptidylproline (omega=0). Its function is as follows. PPIases accelerate the folding of proteins. It catalyzes the cis-trans isomerization of proline imidic peptide bonds in oligopeptides. Acts as a regulatory subunit for PP2A-like phosphatases modulating their activity or substrate specificity, probably by inducing a conformational change in the catalytic subunit, a direct target of the PPIase. Can reactivate inactive phosphatase PP2A-phosphatase methylesterase complexes (PP2Ai) in presence of ATP and Mg(2+) by dissociating the inactive form from the complex. The sequence is that of Serine/threonine-protein phosphatase 2A activator 1 (rrd1) from Schizosaccharomyces pombe (strain 972 / ATCC 24843) (Fission yeast).